Reading from the N-terminus, the 461-residue chain is Chromosomal replication initiator protein DnaA (461 aa).

The tract at residues 1 to 87 (MAVSLWQQCI…IGSRPSAKPV (87 aa)) is domain I, interacts with DnaA modulators. Positions 87 to 124 (VVQATAAIRPKPAASKAVEKPTFNAPQAEPAITANHRS) are domain II. The tract at residues 125–341 (NINPTYQFDN…GALNRVIANA (217 aa)) is domain III, AAA+ region. Residues G169, G171, K172, and T173 each coordinate ATP. The tract at residues 342 to 461 (NFTGRPITID…YANLIRTLSS (120 aa)) is domain IV, binds dsDNA.

This sequence belongs to the DnaA family. In terms of assembly, oligomerizes as a right-handed, spiral filament on DNA at oriC.

It is found in the cytoplasm. Plays an essential role in the initiation and regulation of chromosomal replication. ATP-DnaA binds to the origin of replication (oriC) to initiate formation of the DNA replication initiation complex once per cell cycle. Binds the DnaA box (a 9 base pair repeat at the origin) and separates the double-stranded (ds)DNA. Forms a right-handed helical filament on oriC DNA; dsDNA binds to the exterior of the filament while single-stranded (ss)DNA is stabiized in the filament's interior. The ATP-DnaA-oriC complex binds and stabilizes one strand of the AT-rich DNA unwinding element (DUE), permitting loading of DNA polymerase. After initiation quickly degrades to an ADP-DnaA complex that is not apt for DNA replication. Binds acidic phospholipids. The protein is Chromosomal replication initiator protein DnaA of Shewanella piezotolerans (strain WP3 / JCM 13877).